The chain runs to 235 residues: Ribosomal RNA small subunit methyltransferase G (235 aa).

S-adenosyl-L-methionine is bound by residues Gly98, Met103, 149-150, and Arg164; that span reads VE.

Belongs to the methyltransferase superfamily. RNA methyltransferase RsmG family.

The protein resides in the cytoplasm. It catalyses the reaction guanosine(527) in 16S rRNA + S-adenosyl-L-methionine = N(7)-methylguanosine(527) in 16S rRNA + S-adenosyl-L-homocysteine. Specifically methylates the N7 position of guanine in position 527 of 16S rRNA. The polypeptide is Ribosomal RNA small subunit methyltransferase G (Cupriavidus metallidurans (strain ATCC 43123 / DSM 2839 / NBRC 102507 / CH34) (Ralstonia metallidurans)).